Reading from the N-terminus, the 425-residue chain is Protein upregulated in glial subsets pugs-5 (425 aa).

Over residues 355-373 the composition is skewed to basic and acidic residues; it reads NNNDVEKSTQIEKKPEKQG. The segment at 355 to 407 is disordered; that stretch reads NNNDVEKSTQIEKKPEKQGPEIQEEVVEMETVKDEQPPKTSAVRFKENSPRLM.

The protein is Protein upregulated in glial subsets pugs-5 of Caenorhabditis elegans.